The chain runs to 940 residues: Alanine--tRNA ligase (940 aa).

Zn(2+) is bound by residues His581, His585, Cys683, and His687.

Belongs to the class-II aminoacyl-tRNA synthetase family. Zn(2+) is required as a cofactor.

Its subcellular location is the cytoplasm. The catalysed reaction is tRNA(Ala) + L-alanine + ATP = L-alanyl-tRNA(Ala) + AMP + diphosphate. Its function is as follows. Catalyzes the attachment of alanine to tRNA(Ala) in a two-step reaction: alanine is first activated by ATP to form Ala-AMP and then transferred to the acceptor end of tRNA(Ala). Also edits incorrectly charged Ser-tRNA(Ala) and Gly-tRNA(Ala) via its editing domain. In Leptospira borgpetersenii serovar Hardjo-bovis (strain JB197), this protein is Alanine--tRNA ligase.